The sequence spans 593 residues: Zinc metalloproteinase-disintegrin-like atrase-B (593 aa).

The first 20 residues, 1-20 (MIQALLVIICLAVFPHQGSS), serve as a signal peptide directing secretion. The propeptide occupies 21 to 191 (IILESGNVND…DESIEKTSQL (171 aa)). The region spanning 205-400 (KYIEFYVIVD…DRPQCILNKP (196 aa)) is the Peptidase M12B domain. Positions 208 and 292 each coordinate Ca(2+). 3 cysteine pairs are disulfide-bonded: Cys-316–Cys-395, Cys-356–Cys-379, and Cys-358–Cys-363. Asn-319 carries N-linked (GlcNAc...) asparagine glycosylation. His-341 lines the Zn(2+) pocket. The active site involves Glu-342. Zn(2+) contacts are provided by His-345 and His-351. Cys-395, Asn-398, Ile-410, Asn-413, Phe-415, Glu-417, Glu-420, and Asp-423 together coordinate Ca(2+). In terms of domain architecture, Disintegrin spans 408–477 (PPICGNYFVE…ECPTDSLQRN (70 aa)). Intrachain disulfides connect Cys-422-Cys-435, Cys-424-Cys-430, Cys-434-Cys-440, Cys-449-Cys-469, Cys-456-Cys-488, Cys-481-Cys-493, Cys-500-Cys-550, Cys-515-Cys-558, Cys-528-Cys-538, Cys-545-Cys-581, and Cys-575-Cys-586. Positions 455–457 (DCD) match the D/ECD-tripeptide motif. Positions 457, 458, 460, and 472 each coordinate Ca(2+). N-linked (GlcNAc...) asparagine glycosylation is present at Asn-490.

This sequence belongs to the venom metalloproteinase (M12B) family. P-III subfamily. P-IIIa sub-subfamily. Monomer. The cofactor is Zn(2+). Expressed by the venom gland.

It localises to the secreted. With respect to regulation, inhibited by EDTA, EGTA, 1,10-phenanthroline and DTT. Not inhibited by PMSF and SBTI. Its function is as follows. Snake venom zinc protease that inhibits the classical and alternative pathways of complement by cleaving factor B, C6, C7, and C8. Also slowly and selectively degrades alpha-chain of fibrinogen (FGA), and shows edema-inducing activity. The sequence is that of Zinc metalloproteinase-disintegrin-like atrase-B from Naja atra (Chinese cobra).